The primary structure comprises 243 residues: DNA repair protein RecO (243 aa).

It belongs to the RecO family.

Functionally, involved in DNA repair and RecF pathway recombination. The sequence is that of DNA repair protein RecO from Xylella fastidiosa (strain M23).